A 758-amino-acid chain; its full sequence is Maturase-like protein 2 (758 aa).

The protein localises to the plastid. Its subcellular location is the chloroplast. This is Maturase-like protein 2 (mat2) from Euglena gracilis.